The primary structure comprises 331 residues: MNNDNKRSAGGLGLVGDIGGTNARFALWRGQRLESIEVLACADYPRPELAVRDYLARIGESVANIDSVCLACAGPVGAADFRFTNNHWVINRAAFREELGLDHLLLVNDFSTMAWAASRLGADELVQVRAGSAQADRARLIIGPGTGLGVGSLLPLGGGRWEVLPCEGGHVDLPVTSPRDFALWQGLQARYGHVSAERALSGNGLLALYEISCALDGVAVRASSAAEVGALAMAGDAQADAVLEHFFLWLARVAGNAVLTVGALGGVYITGGIVPRFLERFIASGFAEAFARRGKTSGAYLQDVPVWVMTAEHPGLLGAGVALQQALDAEG.

16-21 contributes to the ATP binding site; sequence GDIGGT.

The protein belongs to the bacterial glucokinase family.

It is found in the cytoplasm. It catalyses the reaction D-glucose + ATP = D-glucose 6-phosphate + ADP + H(+). The protein is Glucokinase of Pseudomonas aeruginosa (strain UCBPP-PA14).